Here is a 398-residue protein sequence, read N- to C-terminus: Secreted aspartic protease 2 (398 aa).

Residues 1 to 18 (MFLKNIFIALAIALLVDA) form the signal peptide. Positions 19 to 56 (TPTTTKRSAGFVALDFSVVKTPKAFPVTNGQEGKTSKR) are cleaved as a propeptide — activation peptide. The region spanning 70 to 384 (YAADITVGSN…DLDDNEISLA (315 aa)) is the Peptidase A1 domain. D88 is a catalytic residue. 88–90 (DTG) is a binding site for pepstatin A. An intrachain disulfide couples C103 to C115. 141–142 (GD) serves as a coordination point for pepstatin A. Zn(2+)-binding residues include D247 and D270. Residue D274 is part of the active site. 274–278 (DSGTT) provides a ligand contact to pepstatin A. A disulfide bridge links C312 with C350. Residues N313 and N321 are each glycosylated (N-linked (GlcNAc...) asparagine).

Belongs to the peptidase A1 family. As to quaternary structure, monomer.

It localises to the secreted. The enzyme catalyses Preferential cleavage at the carboxyl of hydrophobic amino acids, but fails to cleave 15-Leu-|-Tyr-16, 16-Tyr-|-Leu-17 and 24-Phe-|-Phe-25 of insulin B chain. Activates trypsinogen, and degrades keratin.. Its function is as follows. Secreted aspartic peptidases (SAPs) are a group of ten acidic hydrolases considered as key virulence factors. These enzymes supply the fungus with nutrient amino acids as well as are able to degrade the selected host's proteins involved in the immune defense. Induces host inflammatory cytokine production in a proteolytic activity-independent way. Plays a role in tissue damage during superficial infection. Moreover, acts toward human hemoglobin though limited proteolysis to generate a variety of antimicrobial hemocidins, enabling to compete with the other microorganisms of the same physiological niche using the microbicidal peptides generated from the host protein. In terms of biological role, plays a key role in defense against host by cleaving histatin-5 (Hst 5), a peptide from human saliva that carries out fungicidal activity. The cleavage rate decreases in an order of SAP2 &gt; SAP9 &gt; SAP3 &gt; SAP7 &gt; SAP4 &gt; SAP1 &gt; SAP8. The first cleavage occurs between residues 'Lys-17' and 'His-18' of Hst 5, giving DSHAKRHHGYKRKFHEK and HHSHRGY peptides. Simultaneously, the DSHAKRHHGYKRK peptide is also formed. Further fragmentation by SAP2 results in FHEK and DSHAKRHHGY products. The sequence is that of Secreted aspartic protease 2 from Candida albicans (strain SC5314 / ATCC MYA-2876) (Yeast).